The following is a 508-amino-acid chain: Photosystem II CP47 reaction center protein (508 aa).

The next 6 helical transmembrane spans lie at 21-36 (SVHI…WAGS), 101-115 (IVFS…IWHW), 140-156 (GIHL…FGAF), 203-218 (IAAG…FHLS), 237-252 (VLSS…AFVV), and 457-472 (SFAL…HGAR).

This sequence belongs to the PsbB/PsbC family. PsbB subfamily. In terms of assembly, PSII is composed of 1 copy each of membrane proteins PsbA, PsbB, PsbC, PsbD, PsbE, PsbF, PsbH, PsbI, PsbJ, PsbK, PsbL, PsbM, PsbT, PsbX, PsbY, PsbZ, Psb30/Ycf12, at least 3 peripheral proteins of the oxygen-evolving complex and a large number of cofactors. It forms dimeric complexes. Binds multiple chlorophylls. PSII binds additional chlorophylls, carotenoids and specific lipids. serves as cofactor.

It is found in the plastid. Its subcellular location is the chloroplast thylakoid membrane. One of the components of the core complex of photosystem II (PSII). It binds chlorophyll and helps catalyze the primary light-induced photochemical processes of PSII. PSII is a light-driven water:plastoquinone oxidoreductase, using light energy to abstract electrons from H(2)O, generating O(2) and a proton gradient subsequently used for ATP formation. In Aethionema cordifolium (Lebanon stonecress), this protein is Photosystem II CP47 reaction center protein.